The sequence spans 349 residues: NADH-quinone oxidoreductase subunit H (349 aa).

8 helical membrane-spanning segments follow: residues 14–34 (LLVW…GCVA), 85–105 (GLFL…WAVI), 120–140 (LLYI…AGWA), 164–184 (MGFA…VDIV), 196–216 (ILSW…ISGV), 243–263 (GMAF…VAAL), 285–305 (AGGF…FLWF), and 324–344 (VFIP…FSPL).

The protein belongs to the complex I subunit 1 family. In terms of assembly, NDH-1 is composed of 14 different subunits. Subunits NuoA, H, J, K, L, M, N constitute the membrane sector of the complex.

It is found in the cell inner membrane. The enzyme catalyses a quinone + NADH + 5 H(+)(in) = a quinol + NAD(+) + 4 H(+)(out). Functionally, NDH-1 shuttles electrons from NADH, via FMN and iron-sulfur (Fe-S) centers, to quinones in the respiratory chain. The immediate electron acceptor for the enzyme in this species is believed to be ubiquinone. Couples the redox reaction to proton translocation (for every two electrons transferred, four hydrogen ions are translocated across the cytoplasmic membrane), and thus conserves the redox energy in a proton gradient. This subunit may bind ubiquinone. In Chromobacterium violaceum (strain ATCC 12472 / DSM 30191 / JCM 1249 / CCUG 213 / NBRC 12614 / NCIMB 9131 / NCTC 9757 / MK), this protein is NADH-quinone oxidoreductase subunit H.